A 256-amino-acid polypeptide reads, in one-letter code: Protein FixA (256 aa).

The protein belongs to the ETF beta-subunit/FixA family. Heterodimer of FixA and FixB.

It functions in the pathway amine and polyamine metabolism; carnitine metabolism. Required for anaerobic carnitine reduction. May bring reductant to CaiA. The chain is Protein FixA from Salmonella agona (strain SL483).